The chain runs to 42 residues: Photosystem I reaction center subunit IX (42 aa).

A helical transmembrane segment spans residues 7–27 (YLSVAPVLSTLWFVSLAGLLI).

It belongs to the PsaJ family.

The protein resides in the plastid. Its subcellular location is the chloroplast thylakoid membrane. Functionally, may help in the organization of the PsaE and PsaF subunits. This is Photosystem I reaction center subunit IX from Capsella bursa-pastoris (Shepherd's purse).